The chain runs to 367 residues: NADH-quinone oxidoreductase subunit D (367 aa).

It belongs to the complex I 49 kDa subunit family. NDH-1 is composed of 14 different subunits. Subunits NuoB, C, D, E, F, and G constitute the peripheral sector of the complex.

Its subcellular location is the cell membrane. The enzyme catalyses a quinone + NADH + 5 H(+)(in) = a quinol + NAD(+) + 4 H(+)(out). NDH-1 shuttles electrons from NADH, via FMN and iron-sulfur (Fe-S) centers, to quinones in the respiratory chain. The immediate electron acceptor for the enzyme in this species is believed to be ubiquinone. Couples the redox reaction to proton translocation (for every two electrons transferred, four hydrogen ions are translocated across the cytoplasmic membrane), and thus conserves the redox energy in a proton gradient. This chain is NADH-quinone oxidoreductase subunit D, found in Dehalococcoides mccartyi (strain ATCC BAA-2266 / KCTC 15142 / 195) (Dehalococcoides ethenogenes (strain 195)).